The chain runs to 448 residues: Adenylosuccinate synthetase (448 aa).

GTP-binding positions include 36-42 and 64-66; these read GDEGKGK and GHT. Aspartate 37 serves as the catalytic Proton acceptor. Residues aspartate 37 and glycine 64 each coordinate Mg(2+). Residues 37-40, 62-65, threonine 154, arginine 168, asparagine 246, threonine 261, and arginine 325 each bind IMP; these read DEGK and NAGH. The active-site Proton donor is the histidine 65. Residue 321–327 coordinates substrate; the sequence is VTTKRKR. Residues arginine 327, 353-355, and 436-438 contribute to the GTP site; these read KLD and GVG.

Belongs to the adenylosuccinate synthetase family. As to quaternary structure, homodimer. Mg(2+) serves as cofactor.

It localises to the cytoplasm. The catalysed reaction is IMP + L-aspartate + GTP = N(6)-(1,2-dicarboxyethyl)-AMP + GDP + phosphate + 2 H(+). It participates in purine metabolism; AMP biosynthesis via de novo pathway; AMP from IMP: step 1/2. Its function is as follows. Plays an important role in the de novo pathway and in the salvage pathway of purine nucleotide biosynthesis. Catalyzes the first committed step in the biosynthesis of AMP from IMP. This chain is Adenylosuccinate synthetase, found in Drosophila persimilis (Fruit fly).